Reading from the N-terminus, the 419-residue chain is Isocitrate dehydrogenase [NADP] 1 (419 aa).

Position 105 (threonine 105) interacts with NADP(+). Positions 114, 116, 120, 130, and 154 each coordinate D-threo-isocitrate. Residue aspartate 308 coordinates Mg(2+). NADP(+)-binding positions include 340–346 (HGTAPKY), asparagine 353, tyrosine 392, and arginine 396.

This sequence belongs to the isocitrate and isopropylmalate dehydrogenases family. In terms of assembly, homodimer. Mg(2+) serves as cofactor. Mn(2+) is required as a cofactor.

The catalysed reaction is D-threo-isocitrate + NADP(+) = 2-oxoglutarate + CO2 + NADPH. IDH activity is not significantly affected by monovalent cations. The combined addition of Mn(2+) and another divalent cation results in the decrease of the activity. Its function is as follows. Catalyzes the oxidative decarboxylation of isocitrate to 2-oxoglutarate and carbon dioxide with the concomitant reduction of NADP(+). Cannot use NAD(+). The sequence is that of Isocitrate dehydrogenase [NADP] 1 from Psychrobacter sp. (strain 13A).